Reading from the N-terminus, the 334-residue chain is L-lactate dehydrogenase B chain (334 aa).

NAD(+) is bound by residues 30–58 (GQVGMACAVSILLRDLCDELALVDVMEDR) and Arg100. Positions 107, 139, and 170 each coordinate substrate. Asn139 is an NAD(+) binding site. His194 serves as the catalytic Proton acceptor. Substrate is bound at residue Thr249.

It belongs to the LDH/MDH superfamily. LDH family. As to quaternary structure, homotetramer.

It localises to the cytoplasm. It carries out the reaction (S)-lactate + NAD(+) = pyruvate + NADH + H(+). Its pathway is fermentation; pyruvate fermentation to lactate; (S)-lactate from pyruvate: step 1/1. Its function is as follows. Interconverts simultaneously and stereospecifically pyruvate and lactate with concomitant interconversion of NADH and NAD(+). In Fundulus heteroclitus (Killifish), this protein is L-lactate dehydrogenase B chain (ldhb).